The chain runs to 646 residues: Secretogranin-1 (646 aa).

An N-terminal signal peptide occupies residues 1–20 (MQPAALLGLLGATVVAAVSS). An intrachain disulfide couples Cys36 to Cys57. Residues 67–90 (ELKNEEKSENENTRFEVRLLRDPA) are compositionally biased toward basic and acidic residues. The tract at residues 67–483 (ELKNEEKSEN…GKQYAPHHIT (417 aa)) is disordered. Ser74 carries the post-translational modification Phosphoserine. Thr79 and Thr92 each carry phosphothreonine. 4 positions are modified to phosphoserine: Ser93, Ser99, Ser100, and Ser104. Ser93 carries O-linked (Xyl...) (chondroitin sulfate) serine glycosylation. A glycan (O-linked (GalNAc...) threonine) is linked at Thr113. 2 stretches are compositionally biased toward basic and acidic residues: residues 119–128 (SGGHSRERAG) and 137–173 (KEAK…ERLS). Phosphoserine is present on residues Ser123, Ser146, and Ser168. Positions 182 to 191 (AFLNQRNQTP) are enriched in polar residues. A glycan (O-linked (GalNAc...) threonine) is linked at Thr190. Ser205 is subject to Phosphoserine. Positions 208 to 228 (GLEKSHSRERSSQESGEETKS) are enriched in basic and acidic residues. Residue Ser222 is glycosylated (O-linked (Xyl...) (chondroitin sulfate) serine). Positions 260–270 (RHSRPRHHHGR) are enriched in basic residues. Phosphoserine is present on residues Ser276, Ser277, and Ser295. At Tyr315 the chain carries Sulfotyrosine. Positions 340–361 (GRGEHQALRRPSEESLEQENKR) are enriched in basic and acidic residues. Residues Ser351 and Ser354 each carry the phosphoserine modification. Phosphotyrosine is present on Tyr374. Phosphoserine occurs at positions 375 and 378. Over residues 406-425 (TDEKRFLGETHHRVQESQRD) the composition is skewed to basic and acidic residues. Tyr441 carries the post-translational modification Sulfotyrosine. Composition is skewed to basic and acidic residues over residues 442–451 (GEEKGEEAAR) and 459–472 (DPRD…EARL). Pyrrolidone carboxylic acid; in secretogranin-1(476-566) is present on Gln476. 3 positions are modified to phosphoserine: Ser502, Ser503, and Ser514. Tyr535 is modified (sulfotyrosine). The residue at position 567 (Gln567) is a Pyrrolidone carboxylic acid; in peptide BAM-1745. A Phosphoserine modification is found at Ser584. The tract at residues 588-620 (PDFYDSEEQMSPQHTAENEEEKAGQGVLTEEEE) is disordered. Tyr591 carries the post-translational modification Sulfotyrosine. A phosphoserine mark is found at Ser593 and Ser598. Gln634 is modified (pyrrolidone carboxylic acid; in Secretolytin; partial).

The protein belongs to the chromogranin/secretogranin protein family. Interacts with ITPR1 in the secretory granules. In terms of processing, O-glycosylated by the trisaccharide, GalNAc-Gal-NeuAc, on 2 sites in the N-terminal. May be glycated. Post-translationally, extensively phosphorylated. Differentially processed on numerous sites throughout the sequence depending on tissue type.

It localises to the cytoplasmic vesicle. The protein localises to the secretory vesicle membrane. Its subcellular location is the secreted. Secretogranin-1 is a neuroendocrine secretory granule protein, which may be the precursor for other biologically active peptides. The 16 pairs of basic AA distributed throughout its sequence may be used as proteolytic cleavage sites. In terms of biological role, secretolytin has antibacterial activity. This chain is Secretogranin-1 (CHGB), found in Bos taurus (Bovine).